A 283-amino-acid chain; its full sequence is 2-dehydro-3-deoxyphosphooctonate aldolase (283 aa).

Belongs to the KdsA family.

The protein resides in the cytoplasm. The enzyme catalyses D-arabinose 5-phosphate + phosphoenolpyruvate + H2O = 3-deoxy-alpha-D-manno-2-octulosonate-8-phosphate + phosphate. It participates in carbohydrate biosynthesis; 3-deoxy-D-manno-octulosonate biosynthesis; 3-deoxy-D-manno-octulosonate from D-ribulose 5-phosphate: step 2/3. Its pathway is bacterial outer membrane biogenesis; lipopolysaccharide biosynthesis. In Prochlorococcus marinus (strain MIT 9313), this protein is 2-dehydro-3-deoxyphosphooctonate aldolase.